Consider the following 344-residue polypeptide: MRVIRPVEHADIAALMQLAGKTGGGLTSLPANEATLAARIERALKTWSGELPKGEQGYVFVLEDSETGEVGGICAIEVAVGLNDPWYNYRVGTLVHASKELNVYNALPTLFLSNDHTGSSELCTLFLDPEWRKEGNGYLLSKSRFMFMAAFRDKFNEKVVAEMRGVIDEHGYSPFWQSLGKRFFSMDFSRADFLCGTGQKAFIAELMPKHPIYTHFLSEEAQAVIGEVHPQTAPARAVLEKEGFRYRHYIDIFDGGPTLECDIDRVRAIRKSRLVEVAEGQPAPGDYPACLVANENYHHFRAALVRADPQTSRLVLTAAQLDALKCRAGDHVRLVRLCAEEKTV.

Succinyl-CoA is bound at residue leucine 125. Histidine 229 functions as the Proton donor in the catalytic mechanism.

It belongs to the arginine N-succinyltransferase family.

The enzyme catalyses succinyl-CoA + L-arginine = N(2)-succinyl-L-arginine + CoA + H(+). Its pathway is amino-acid degradation; L-arginine degradation via AST pathway; L-glutamate and succinate from L-arginine: step 1/5. In terms of biological role, catalyzes the transfer of succinyl-CoA to arginine to produce N(2)-succinylarginine. In Salmonella dublin (strain CT_02021853), this protein is Arginine N-succinyltransferase.